A 298-amino-acid polypeptide reads, in one-letter code: NAD kinase (298 aa).

Asp80 functions as the Proton acceptor in the catalytic mechanism. NAD(+)-binding positions include 80 to 81 (DG), 154 to 155 (ND), Arg182, Asp184, 195 to 200 (TAYALS), Ala219, and Gln253.

This sequence belongs to the NAD kinase family. It depends on a divalent metal cation as a cofactor.

The protein localises to the cytoplasm. The catalysed reaction is NAD(+) + ATP = ADP + NADP(+) + H(+). In terms of biological role, involved in the regulation of the intracellular balance of NAD and NADP, and is a key enzyme in the biosynthesis of NADP. Catalyzes specifically the phosphorylation on 2'-hydroxyl of the adenosine moiety of NAD to yield NADP. In Paracidovorax citrulli (strain AAC00-1) (Acidovorax citrulli), this protein is NAD kinase.